Reading from the N-terminus, the 377-residue chain is Histidinol-phosphate aminotransferase (377 aa).

At Lys-232 the chain carries N6-(pyridoxal phosphate)lysine.

The protein belongs to the class-II pyridoxal-phosphate-dependent aminotransferase family. Histidinol-phosphate aminotransferase subfamily. As to quaternary structure, homodimer. Requires pyridoxal 5'-phosphate as cofactor.

It carries out the reaction L-histidinol phosphate + 2-oxoglutarate = 3-(imidazol-4-yl)-2-oxopropyl phosphate + L-glutamate. It participates in amino-acid biosynthesis; L-histidine biosynthesis; L-histidine from 5-phospho-alpha-D-ribose 1-diphosphate: step 7/9. The sequence is that of Histidinol-phosphate aminotransferase from Mycobacterium sp. (strain JLS).